The sequence spans 417 residues: Snake venom metalloproteinase acutolysin-C (417 aa).

The signal sequence occupies residues 1–20 (MIQVLLVTICLAALPYQGSS). The propeptide at 21-189 (IMLESGKVND…KRPSRLNLTP (169 aa)) is activation peptide. The 196-residue stretch at 197 to 392 (TSVNLQLIVD…KKPKCIHKKS (196 aa)) folds into the Peptidase M12B domain. 3 disulfide bridges follow: C308-C387, C349-C371, and C351-C354. Position 333 (H333) interacts with Zn(2+). E334 is a catalytic residue. 2 residues coordinate Zn(2+): H337 and H343. Positions 393-417 (LKTDTVSTSVSGNEPLDDNVDGFHA) are excised as a propeptide. Residues 398-417 (VSTSVSGNEPLDDNVDGFHA) form a disordered region. Positions 407-417 (PLDDNVDGFHA) are enriched in acidic residues.

This sequence belongs to the venom metalloproteinase (M12B) family. P-I subfamily. As to quaternary structure, monomer. Zn(2+) serves as cofactor. Expressed by the venom gland.

The protein resides in the secreted. Functionally, this protein is an alkaline zinc metalloprotease from snake venom that possesses weak hemorrhagic activity. The protein is Snake venom metalloproteinase acutolysin-C of Deinagkistrodon acutus (Hundred-pace snake).